A 185-amino-acid chain; its full sequence is Ribosome maturation factor RimM (185 aa).

The PRC barrel domain occupies 106–185 (EGDYYWKDLM…SIEVDWDPGF (80 aa)).

It belongs to the RimM family. As to quaternary structure, binds ribosomal protein uS19.

Its subcellular location is the cytoplasm. In terms of biological role, an accessory protein needed during the final step in the assembly of 30S ribosomal subunit, possibly for assembly of the head region. Essential for efficient processing of 16S rRNA. May be needed both before and after RbfA during the maturation of 16S rRNA. It has affinity for free ribosomal 30S subunits but not for 70S ribosomes. In Shigella dysenteriae serotype 1 (strain Sd197), this protein is Ribosome maturation factor RimM.